The sequence spans 259 residues: Hemin import ATP-binding protein HmuV (259 aa).

The region spanning Ile6 to Gln242 is the ABC transporter domain. Gly38 to Ser45 serves as a coordination point for ATP.

This sequence belongs to the ABC transporter superfamily. Heme (hemin) importer (TC 3.A.1.14.5) family. In terms of assembly, the complex is composed of two ATP-binding proteins (HmuV), two transmembrane proteins (HmuU) and a solute-binding protein (HmuT).

It localises to the cell inner membrane. Its function is as follows. Part of the ABC transporter complex HmuTUV involved in hemin import. Responsible for energy coupling to the transport system. This chain is Hemin import ATP-binding protein HmuV, found in Vibrio cholerae serotype O1 (strain ATCC 39315 / El Tor Inaba N16961).